The chain runs to 890 residues: Exo-beta-D-glucosaminidase (890 aa).

Residues 1–18 (MIAKAVAALLLGSGLASA) form the signal peptide. A propeptide spanning residues 19–26 (AGTPLTSK) is cleaved from the precursor. Residues N194, N334, and N438 are each glycosylated (N-linked (GlcNAc...) asparagine). The Proton donor role is filled by D462. The Nucleophile role is filled by E537. 2 N-linked (GlcNAc...) asparagine glycosylation sites follow: N576 and N687.

The protein belongs to the glycosyl hydrolase 2 family. As to quaternary structure, monomer.

The protein resides in the secreted. It localises to the extracellular space. The catalysed reaction is Hydrolysis of chitosan or chitosan oligosaccharides to remove successive D-glucosamine residues from the non-reducing termini.. In terms of biological role, hydrolyzes chitosan and chitooligosaccharides with retention of anomeric configuration. Has no activity against beta-D-galactoside, beta-D-glucuronide, beta-D-mannoside, chitin, glycol chitosan, cellulose, N,N'-diacetylchitibiose and pNP-GlcNAc. This is Exo-beta-D-glucosaminidase from Hypocrea virens (Gliocladium virens).